The following is a 491-amino-acid chain: Nucleoside transporter 1.2 (491 aa).

6 consecutive transmembrane segments (helical) span residues 27 to 47, 82 to 102, 109 to 129, 136 to 156, 173 to 193, and 209 to 229; these read FYVYVVAFMCGVSMMMSVNAV, YNLIGIVTSLIMEPLTLLSWF, VRLLGGLVILIVEIIVLMVVP, AGAVATICCTGFIGGFGKSIF, STMMGGVGMSGVLTSLLQIIV, and KIYYGLDVGIQGMTFVALILL. Basic and acidic residues predominate over residues 261–273; it reads HTDEHPTHDKEGR. Disordered regions lie at residues 261–280 and 290–309; these read HTDEHPTHDKEGRNSSSGKE and AAAKSEGPDAVEESSWPHEV. N-linked (GlcNAc...) asparagine glycosylation is present at N274. Helical transmembrane passes span 333-353, 361-381, 395-415, 427-447, and 460-480; these read MFVACAFNFLITLFLFPGIAV, WFSTIAVFIFNVFDVLGRFSP, WIIVAASFARVIFVPLLLLHS, VMEVIFGFSNGYVGSMALVLG, and FVAGTLMGISILVGGTIGTVL.

Belongs to the SLC29A/ENT transporter (TC 2.A.57) family.

The protein resides in the membrane. It catalyses the reaction adenosine(in) + H(+)(in) = adenosine(out) + H(+)(out). The enzyme catalyses uridine(in) + H(+)(in) = uridine(out) + H(+)(out). Its function is as follows. Sodium-independent nucleoside:H(+) symporter; transports adenosine with high affinity and uridine with moderate affinity. Can transport cytidine and thymidine. This is Nucleoside transporter 1.2 from Leishmania donovani.